Reading from the N-terminus, the 381-residue chain is Probable envelope ADP,ATP carrier protein, chloroplastic (381 aa).

A chloroplast-targeting transit peptide spans 1 to 26 (MEEDRAILTFHRIPSLNSSLITTSSP). The next 5 helical transmembrane spans lie at 78 to 98 (LAILALVPKDAAIFAAGALAG), 154 to 179 (LPQVIRVLPYSAVQLLAYESYKNLFK), 191 to 211 (LAAGACAGMTSTLLTYPLDVL), 237 to 257 (IASFYYGLGPSLVGIAPYIAV), and 281 to 301 (LLTAVLSAGIATLTCYPLDTV). Solcar repeat units follow at residues 85 to 177 (PKDA…YKNL), 185 to 268 (LSVI…VKKS), and 279 to 359 (SSLL…VKRL). ADP is bound at residue arginine 159. Arginine 302 contributes to the ADP binding site. The chain crosses the membrane as a helical span at residues 334–360 (GFLPNALKTLPNSSIRLTTFDMVKRLI).

This sequence belongs to the mitochondrial carrier (TC 2.A.29) family.

It localises to the plastid. The protein resides in the chloroplast membrane. In terms of biological role, transports adenine nucleotides. This is Probable envelope ADP,ATP carrier protein, chloroplastic (EAAC) from Arabidopsis thaliana (Mouse-ear cress).